The primary structure comprises 2211 residues: MASHAEPTRLFLFGDQTYDFVADLRDLLNIRNNPILVAFLEQSHHVIRAQMIRELPPKEHKQARTASLAELLQKYVDRKLPSAFQTALSCVTQIGLFMRQFDDPRVLYPHANDSYVLGVCTGSLAAAAISCSTSLSELLPIAVQTVLVAFRLGLWAEKVRDNLEISETNQTQPWSAVCHVPPEEVAIAIDRFSHKKVRSPVYRAQRPWITATSAKTTTVSASPDILSQLASQAPFTNSKLWREIPIYVPAHNNHLFSSRDVDDILATTNENPWSTFGAQIPFLSSVTGKLAWVRNYRDLLHLALSQCLIEPIRWDVVEAEVPRLLKDRDGLDTLTIVAFTTVLSKSLSNALVTEGIKPAEPPTSINKTPERYSHRPGSDRGKLAIVSMSGRFPEAPSTDSFWDLLYKGLDVCKEVPLRRWDVKTHVDPSGKARNKGATRWGCWLDFAGEFDPRFFSISPKEAPQMDPAQRMALMSTYEAMERGGIVPDTTPSTQRNRIGVFHGVTSNDWMETNTAQNIDTYFITGGNRGFIPGRINFCFEFSGPSYSNDTACSSSLAAIHLACNSLWRGDCDTAVAGGTNMIFTPDGHTGLDKGFFLSRTGNCKAFDDAADGYCRAEGVGTVFIKRLEDALAENDPILATILDIKTNHSAMSDSMTRPFKPAQIDNMSALLSTAGISPLDLSYIEMHGTGTQVGDAVEMESVLSLFAPDETFRPRDKPLYVGSAKANIGHGEGVSGVTSLIKVLLMMKNDTIPPHCGIKPGSRINRNYPDLPARNVHIAFEPKPWPRTDTPRRVLINNFSAAGGNTAVLVEDAPVRDPVTASDPRTSHIVTVSGHVGKSLKLNLEKLRDHLVKRPEINPSELSYTTTARRWHHPHRVSITGANTMEILRNVESAIARGHGVNRPATKPKIVIACSGQGSQYTGMGWQLYNSYPTFRSDLERFDQLARSYGFPSFLEVYTSKPVGDSMEDLLPVIVQLALVSLEMALGNLLGSFGLKPSAVIGHSLGEYAALYISGVLSAADTLYLVGMRAKLLQERCQRGTHAMLAVRASPVTLCEVLAESNCEVACHNGPNDTVLSGPLKEVMNLQNSLSATGIKGTLLKLPFAFHSAQVQPILEEFKNVARGVTFHKPQIPVLSPLLVKVIDEKGTVDPVYLARHCREPVKMVSVLEHARDQHIITDRTIVIDVGPKALMAGMIKTTLDKDTSSALPTLGPSLDVWKSLTNILGTLYSRGLDINWVAYHEPFGSAKKVIELPSYGWDLKDYFIPYKGEWCLHRHEIRCSCATPGKETATSDYQLPSDEQVAAKRPSKQDESKEAYPEIVATTTVHRVVEEKTEPLGATLVVETDISRPDVNQIAQGHLVDGIPLCTPSVYADIALHVGRYSMNRLRASHPGAMDGVVDVADMVIDKALIPHGKSPQLLRTTLTMTWPPKAAATTRSAKIKFATYFADGKLDTEHATCTVRFTSEAQLKSLQKKVPEYQERIKKLGEGLRQGQFIRYTTKSGYKLMSSMASFHRDYKLLNHLILNEADNEAVSTMDFSAAKSEGTFAAHPAYVDAITQVGGFAMNANDNTDIQQEVFVNHGWDSFQVYQPLVKGKTYEVYVRMTEDEKGDLVHGDTIVLYGDAVVAFFKGLSLRRVPRRGLRMVLQQASDKAARLHGNQQAVKTQAPQRAALKQKPQSSPTQPHASKVAYSRSATSPTAGKPVVAARDLSREGDDKFKAVLSVISEESGVALGELTADTNFADIGIDSLSSMVIGSRLREDLGLELGAEFSLFIDCPTVRSLKTLLSGSAVSVNNDKDELEPGQEAETAAPEQLDLRIGDAAPSKVRDANIEPLDLGDELFRNVLRIVSEESGVALDELSAETVFADIGIDSLSSMVITSRFREDLGMSLDSSFNLFEEVPTVARLQEFFGTTSGSTTGSSGSGSSEDETDSIPSTPEEYTTADTRVPECRPTTSVVLQGLPQMAKQILFMLPDGGGSASSYLTIPRLHADVAIVGLNCPYARDPENMNCTHQSMIQSFCNEIKRRQPEGPYHLGGWSSGGAFAYVTAEALINAGNEVHSLIIIDAPVPQVMEKLPTSFYEYCNNLGLFSNQPGGTTDGTAQPPPYLIPHFQATVDVMLDYRVAPLKTNRMPKVGIIWASETVMDEDNAPKMKGMHFMVQKRKDFGPDGWDVVCPGAVFDIVRAEGANHFTLMTKEHVYLVRELIDRVMG.

The tract at residues 11–251 (FLFGDQTYDF…REIPIYVPAH (241 aa)) is starter unit:ACP transacylase (SAT) domain. Residues 358 to 378 (PAEPPTSINKTPERYSHRPGS) form a disordered region. Over residues 368-378 (TPERYSHRPGS) the composition is skewed to basic and acidic residues. Residues 380 to 812 (RGKLAIVSMS…GGNTAVLVED (433 aa)) enclose the Ketosynthase family 3 (KS3) domain. Active-site for beta-ketoacyl synthase activity residues include Cys552, His687, and His730. Residues 912-1201 (IACSGQGSQY…MAGMIKTTLD (290 aa)) are malonyl-CoA:ACP transacylase (MAT) domain. Ser1004 acts as the For acyl/malonyl transferase activity in catalysis. The segment at 1289–1316 (TATSDYQLPSDEQVAAKRPSKQDESKEA) is disordered. Residues 1327–1468 (HRVVEEKTEP…CTVRFTSEAQ (142 aa)) form an N-terminal hotdog fold region. Residues 1327–1643 (HRVVEEKTEP…LRRVPRRGLR (317 aa)) enclose the PKS/mFAS DH domain. The tract at residues 1340–1643 (TLVVETDISR…LRRVPRRGLR (304 aa)) is product template (PT) domain. The Proton acceptor; for dehydratase activity role is filled by His1359. Residues 1495–1643 (FIRYTTKSGY…LRRVPRRGLR (149 aa)) form a C-terminal hotdog fold region. Asp1555 functions as the Proton donor; for dehydratase activity in the catalytic mechanism. The interval 1655–1706 (RLHGNQQAVKTQAPQRAALKQKPQSSPTQPHASKVAYSRSATSPTAGKPVVA) is disordered. 2 stretches are compositionally biased toward polar residues: residues 1658 to 1668 (GNQQAVKTQAP) and 1676 to 1685 (KPQSSPTQPH). 2 Carrier domains span residues 1712–1791 (REGD…SGSA) and 1839–1915 (DELF…GTTS). O-(pantetheine 4'-phosphoryl)serine is present on residues Ser1749 and Ser1873. The segment covering 1912-1926 (GTTSGSTTGSSGSGS) has biased composition (low complexity). Residues 1912-1947 (GTTSGSTTGSSGSGSSEDETDSIPSTPEEYTTADTR) form a disordered region. Polar residues predominate over residues 1934–1945 (IPSTPEEYTTAD). The thioesterase/Claisen cyclase (TE/CLC) domain stretch occupies residues 1969 to 2205 (ILFMLPDGGG…KEHVYLVREL (237 aa)). Ser2039 serves as the catalytic For thioesterase activity.

It depends on pantetheine 4'-phosphate as a cofactor.

It carries out the reaction hexanoyl-[ACP] + 7 malonyl-CoA + 6 H(+) = noranthrone + holo-[ACP] + 7 CO2 + 7 CoA + 2 H2O. It functions in the pathway mycotoxin biosynthesis; sterigmatocystin biosynthesis. In terms of biological role, non-reducing polyketide synthase; part of the gene cluster that mediates the biosynthesis of sterigmatocystin (ST), a polyketide-derived furanocoumarin which is part of the most toxic and carcinogenic compounds among the known mycotoxins. The first step in the biosynthesis of sterigmatocystin is the production of hexanoate by the fatty acid synthase (FAS) units stcJ and stcK. The polyketide backbone is assembled by the non-reducing polyketide synthase stcA by condensation of the starter hexanoyl-CoA and 7 malonyl-CoA extender units followed by cyclization and release of norsolorinic acid. Norsolorinic acid is the first stable intermediate in the biosynthesis of sterigmatocystin and is converted into averantin (AVN) by the ketoreductase stcE which reduces the hexanoate ketone to an alcohol. Averantin is then oxidized into 5'-hydroxyaverantin (HAVN) by the cytochrome P450 monooxygenase stcF. 5'-hydroxyaverantin is further converted to 5'-oxyaverantin (OAVN) by the 5'-hydroxyaverantin dehydrogenase stcG. The next step is the conversion of OAVN into averufin (AVF) which is catalyzed by a yet to be identified enzyme. The cytochrome P450 monooxygenase stcB and the flavin-binding monooxygenase stcW are both required for the conversion of averufin to 1-hydroxyversicolorone. The esterase stcI probably catalyzes the formation of versiconal hemiacetal acetate from 1-hydroxyversicolorone. The oxydoreductase stcN then probably catalyzes the biosynthetic step from versiconal to versicolorin B (VERB). The next step is performed by the versicolorin B desaturase stcL to produce versicolorin A (VERA). The ketoreductase stcU and the cytochrome P450 monooxygenase stcS are involved in the conversion of versicolorin A to demethylsterigmatocystin. The Baeyer-Villiger oxidas stcQ and the reductase stcR might be involved in the biosynthetic step from versicolorin A to demethylsterigmatocystin. The final step in the biosynthesis of sterigmatocystin is the methylation of demethylsterigmatocystin catalyzed by the methyltransferase stcP. The polypeptide is Norsolorinic acid synthase stcA (Emericella nidulans (strain FGSC A4 / ATCC 38163 / CBS 112.46 / NRRL 194 / M139) (Aspergillus nidulans)).